Here is a 1106-residue protein sequence, read N- to C-terminus: Zinc finger protein GLI1 (1106 aa).

Residues 1-20 (MFNSMTPPPISSYGEPCCLR) form an SNAG domain region. The interval 120-124 (SYGHL) is interaction with SUFU. 5 C2H2-type zinc fingers span residues 235–260 (TDCR…NSEH), 268–295 (FVCH…MRRH), 301–325 (HKCT…LRSH), 331–356 (YMCE…NRTH), and 362–387 (YVCK…KTVH). The interval 283–291 (KAQYMLVVH) is interaction with DNA. 2 interaction with DNA regions span residues 345–350 (ASDRAK) and 375–381 (DPSSLRK). Disordered regions lie at residues 375–485 (DPSS…DEGP), 516–580 (GLKL…SLPG), 732–792 (YGGP…LYPG), 817–889 (EQGC…PTHS), and 914–942 (GRED…SRAK). Basic and acidic residues predominate over residues 413-428 (EPKREREGGPIREESR). Positions 442–463 (PGAQSSCSSDHSPAGSAANTDS) are enriched in polar residues. K518 carries the N6-acetyllysine modification. Low complexity-rich tracts occupy residues 544-560 (SSSS…RRSS) and 737-753 (GAAA…SLPL). Positions 754–766 (GPGPPTNYGPNPC) are enriched in pro residues. The segment covering 768–779 (QQASYPDPTQET) has biased composition (polar residues). K1003 participates in a covalent cross-link: Glycyl lysine isopeptide (Lys-Gly) (interchain with G-Cter in SUMO2). The tract at residues 1054–1087 (DEPQGLSPPPSHDQRGSSGHTPPPSGPPNMAVGN) is disordered.

The protein belongs to the GLI C2H2-type zinc-finger protein family. In terms of assembly, interacts with KIF7. Interacts with STK36. Interacts with ZIC1; the interaction enhances transcription activation. Interacts with SUFU; this inhibits transcriptional activation by GLI1. Phosphorylated in vitro by ULK3. Post-translationally, acetylation at Lys-518 down-regulates transcriptional activity. Deacetylated by HDAC1. In terms of processing, ubiquitinated by the CRL2(FEM1B) complex, suppressing GLI1 transcriptional activator activity. As to expression, detected in testis (at protein level). Testis, myometrium and fallopian tube. Also expressed in the brain with highest expression in the cerebellum, optic nerve and olfactory tract. Isoform 1 is detected in brain, spleen, pancreas, liver, kidney and placenta; isoform 2 is not detectable in these tissues.

The protein localises to the cytoplasm. It is found in the nucleus. Acts as a transcriptional activator. Binds to the DNA consensus sequence 5'-GACCACCCA-3'. Regulates the transcription of specific genes during normal development. Plays a role in craniofacial development and digital development, as well as development of the central nervous system and gastrointestinal tract. Mediates SHH signaling. Plays a role in cell proliferation and differentiation via its role in SHH signaling. Its function is as follows. Acts as a transcriptional activator, but activates a different set of genes than isoform 1. Activates expression of CD24, unlike isoform 1. Mediates SHH signaling. Promotes cancer cell migration. The sequence is that of Zinc finger protein GLI1 (GLI1) from Homo sapiens (Human).